A 940-amino-acid polypeptide reads, in one-letter code: Isoleucine--tRNA ligase (940 aa).

The short motif at 58-68 (PYANGSIHIGH) is the 'HIGH' region element. E564 serves as a coordination point for L-isoleucyl-5'-AMP. A 'KMSKS' region motif is present at residues 605–609 (KMSKS). K608 contacts ATP. C903, C906, C923, and C926 together coordinate Zn(2+).

This sequence belongs to the class-I aminoacyl-tRNA synthetase family. IleS type 1 subfamily. As to quaternary structure, monomer. It depends on Zn(2+) as a cofactor.

The protein localises to the cytoplasm. The catalysed reaction is tRNA(Ile) + L-isoleucine + ATP = L-isoleucyl-tRNA(Ile) + AMP + diphosphate. Functionally, catalyzes the attachment of isoleucine to tRNA(Ile). As IleRS can inadvertently accommodate and process structurally similar amino acids such as valine, to avoid such errors it has two additional distinct tRNA(Ile)-dependent editing activities. One activity is designated as 'pretransfer' editing and involves the hydrolysis of activated Val-AMP. The other activity is designated 'posttransfer' editing and involves deacylation of mischarged Val-tRNA(Ile). This chain is Isoleucine--tRNA ligase, found in Shewanella putrefaciens (strain CN-32 / ATCC BAA-453).